Here is a 337-residue protein sequence, read N- to C-terminus: N-acetyl-gamma-glutamyl-phosphate reductase (337 aa).

The active site involves C149.

Belongs to the NAGSA dehydrogenase family. Type 1 subfamily.

It is found in the cytoplasm. It carries out the reaction N-acetyl-L-glutamate 5-semialdehyde + phosphate + NADP(+) = N-acetyl-L-glutamyl 5-phosphate + NADPH + H(+). It functions in the pathway amino-acid biosynthesis; L-arginine biosynthesis; N(2)-acetyl-L-ornithine from L-glutamate: step 3/4. In terms of biological role, catalyzes the NADPH-dependent reduction of N-acetyl-5-glutamyl phosphate to yield N-acetyl-L-glutamate 5-semialdehyde. In Wolinella succinogenes (strain ATCC 29543 / DSM 1740 / CCUG 13145 / JCM 31913 / LMG 7466 / NCTC 11488 / FDC 602W) (Vibrio succinogenes), this protein is N-acetyl-gamma-glutamyl-phosphate reductase.